We begin with the raw amino-acid sequence, 177 residues long: NADH-quinone oxidoreductase subunit B (177 aa).

The [4Fe-4S] cluster site is built by Cys-56, Cys-57, Cys-121, and Cys-151.

This sequence belongs to the complex I 20 kDa subunit family. NDH-1 is composed of 14 different subunits. Subunits NuoB, C, D, E, F, and G constitute the peripheral sector of the complex. [4Fe-4S] cluster serves as cofactor.

The protein localises to the cell inner membrane. The enzyme catalyses a quinone + NADH + 5 H(+)(in) = a quinol + NAD(+) + 4 H(+)(out). Its function is as follows. NDH-1 shuttles electrons from NADH, via FMN and iron-sulfur (Fe-S) centers, to quinones in the respiratory chain. Couples the redox reaction to proton translocation (for every two electrons transferred, four hydrogen ions are translocated across the cytoplasmic membrane), and thus conserves the redox energy in a proton gradient. The chain is NADH-quinone oxidoreductase subunit B from Roseobacter denitrificans (strain ATCC 33942 / OCh 114) (Erythrobacter sp. (strain OCh 114)).